The primary structure comprises 36 residues: MTAAYLPSILVPLVGLIFPALSMALLFIYIEKETIA.

The chain crosses the membrane as a helical span at residues 9-29 (ILVPLVGLIFPALSMALLFIY).

It belongs to the PsaI family.

The protein resides in the plastid. The protein localises to the chloroplast thylakoid membrane. Its function is as follows. May help in the organization of the PsaL subunit. In Pyropia yezoensis (Susabi-nori), this protein is Photosystem I reaction center subunit VIII.